Consider the following 938-residue polypeptide: Auxilin (938 aa).

A disordered region spans residues 19–41; it reads AAAGENRMKDSENKGASSPDMEP. 3 repeat units span residues 61-64, 65-68, and 69-72. Residues 61–72 are 3 X 4 AA approximate tandem repeats; that stretch reads NLKDNLKDTLKD. One can recognise a Phosphatase tensin-type domain in the interval 80–247; sequence SVSSYTKGDL…GYMCDLLADK (168 aa). A Phosphoserine modification is found at serine 137. Catalysis depends on cysteine 189, which acts as the Phosphocysteine intermediate. A C2 tensin-type domain is found at 253-391; sequence FKPLTIKAIT…FQVTLDIEVQ (139 aa). The short motif at 434-442 is the SH3-binding element; that stretch reads PADLPPDHP. The disordered stretch occupies residues 467–801; it reads EEDHAALVNQ…GKGSTNLEGK (335 aa). Phosphoserine is present on residues serine 478 and serine 481. Residues 531–548 show a composition bias toward polar residues; it reads DVSTNFSSLAAPPSNSEL. Positions 559-569 are enriched in low complexity; sequence TGPAQAGQAGV. 2 stretches are compositionally biased toward polar residues: residues 579 to 596 and 624 to 654; these read VSAQSTPRRTATSASASP and FLNTSSASSDPFLQPTRSPSPTVHASSTPAV. Serine 595 carries the post-translational modification Phosphoserine. Low complexity predominate over residues 679–694; it reads SAATSPTGSSHGTPTH. Positions 754–781 are enriched in polar residues; sequence NWQQTQSKPQSSMPHSSPQNRPNYNVSF. The 65-residue stretch at 874–938 folds into the J domain; that stretch reads TKWKPVGMAD…FENQGQKPLY (65 aa).

Forms a complex composed of HSPA8, CLTC and DNAJC6. Interacts with HSPA8/HSC70 in an ATP-dependent manner; this interaction stimulates the HSPA8's ATPase activity. Interacts with CLTC; this interaction produces a local change in heavy-chain contacts, creating a detectable global distortion of the clathrin coat. Interacts with AP2A2. Interacts with DNM1(GTP-bound form); this interaction allows clathrin-coated vesicle (CCV) formation at the plasma membrane. In terms of processing, the N-terminus is blocked. Post-translationally, phosphorylation at Ser-595 modulates its ability to bind CLTC and therefore the synaptic vesicle endocytosis (SVE).

The protein resides in the cytoplasmic vesicle. It is found in the clathrin-coated vesicle. May act as a protein phosphatase and/or a lipid phosphatase. Co-chaperone that recruits HSPA8/HSC70 to clathrin-coated vesicles (CCVs) and promotes the ATP-dependent dissociation of clathrin from CCVs and participates in clathrin-mediated endocytosis of synaptic vesicles and their recycling and also in intracellular trafficking. Firstly, binds tightly to the clathrin cages, at a ratio of one DNAJC6 per clathrin triskelion. The HSPA8:ATP complex then binds to the clathrin-auxilin cage, initially at a ratio of one HSPA8 per triskelion leading to ATP hydrolysis stimulation and causing a conformational change in the HSPA8. This cycle is repeated three times to drive to a complex containing the clathrin-auxilin cage associated to three HSPA8:ADP complex. The ATP hydrolysis of the third HSPA8:ATP complex leads to a concerted dismantling of the cage into component triskelia. Then, dissociates from the released triskelia and be recycled to initiate another cycle of HSPA8's recruitment. Also acts during the early steps of clathrin-coated vesicle (CCV) formation through its interaction with the GTP bound form of DNM1. The chain is Auxilin from Mus musculus (Mouse).